The chain runs to 162 residues: Meiosis-specific protein HED1 (162 aa).

The tract at residues 67-124 (KNLSENTGGGSPNGGAYLDAKKGVREQDQYQGGPSKELDRLQPPPSMKKSPPRKKKSL) is disordered. Residues 85–94 (DAKKGVREQD) are compositionally biased toward basic and acidic residues.

In terms of assembly, interacts with RAD51.

It localises to the nucleus. Its subcellular location is the chromosome. Involved in regulation of meiotic recombination and repair of DNA damage. Inhibits RAD51-mediated recombination when the meiotic recombination machinery is impaired. The protein is Meiosis-specific protein HED1 (HED1) of Saccharomyces cerevisiae (strain ATCC 204508 / S288c) (Baker's yeast).